We begin with the raw amino-acid sequence, 86 residues long: Small ribosomal subunit protein uS17 (86 aa).

This sequence belongs to the universal ribosomal protein uS17 family. In terms of assembly, part of the 30S ribosomal subunit.

In terms of biological role, one of the primary rRNA binding proteins, it binds specifically to the 5'-end of 16S ribosomal RNA. In Rhizorhabdus wittichii (strain DSM 6014 / CCUG 31198 / JCM 15750 / NBRC 105917 / EY 4224 / RW1) (Sphingomonas wittichii), this protein is Small ribosomal subunit protein uS17.